The sequence spans 355 residues: Uroporphyrinogen decarboxylase (355 aa).

Substrate contacts are provided by residues 27-31, D77, Y154, T209, and H328; that span reads RQAGR.

It belongs to the uroporphyrinogen decarboxylase family. In terms of assembly, homodimer.

The protein resides in the cytoplasm. It carries out the reaction uroporphyrinogen III + 4 H(+) = coproporphyrinogen III + 4 CO2. The protein operates within porphyrin-containing compound metabolism; protoporphyrin-IX biosynthesis; coproporphyrinogen-III from 5-aminolevulinate: step 4/4. In terms of biological role, catalyzes the decarboxylation of four acetate groups of uroporphyrinogen-III to yield coproporphyrinogen-III. The chain is Uroporphyrinogen decarboxylase from Vibrio campbellii (strain ATCC BAA-1116).